A 194-amino-acid chain; its full sequence is Holliday junction branch migration complex subunit RuvA (194 aa).

The domain I stretch occupies residues 1-64 (MIGRLRGVLT…DDSAALYGFL (64 aa)). Positions 65–140 (SESERRLFRH…RAADFNNGIS (76 aa)) are domain II. Residues 140-144 (STSGK) form a flexible linker region. Residues 145–194 (LNLDTVSEAALALQQLGYKPAEAARMARDAGTESDDVASVIKKALQAALR) are domain III.

It belongs to the RuvA family. In terms of assembly, homotetramer. Forms an RuvA(8)-RuvB(12)-Holliday junction (HJ) complex. HJ DNA is sandwiched between 2 RuvA tetramers; dsDNA enters through RuvA and exits via RuvB. An RuvB hexamer assembles on each DNA strand where it exits the tetramer. Each RuvB hexamer is contacted by two RuvA subunits (via domain III) on 2 adjacent RuvB subunits; this complex drives branch migration. In the full resolvosome a probable DNA-RuvA(4)-RuvB(12)-RuvC(2) complex forms which resolves the HJ.

It localises to the cytoplasm. The RuvA-RuvB-RuvC complex processes Holliday junction (HJ) DNA during genetic recombination and DNA repair, while the RuvA-RuvB complex plays an important role in the rescue of blocked DNA replication forks via replication fork reversal (RFR). RuvA specifically binds to HJ cruciform DNA, conferring on it an open structure. The RuvB hexamer acts as an ATP-dependent pump, pulling dsDNA into and through the RuvAB complex. HJ branch migration allows RuvC to scan DNA until it finds its consensus sequence, where it cleaves and resolves the cruciform DNA. This chain is Holliday junction branch migration complex subunit RuvA, found in Xylella fastidiosa (strain 9a5c).